A 211-amino-acid polypeptide reads, in one-letter code: Thymidylate kinase (211 aa).

Residue 7-14 (GCEGSGKS) coordinates ATP.

The protein belongs to the thymidylate kinase family.

The catalysed reaction is dTMP + ATP = dTDP + ADP. Its function is as follows. Phosphorylation of dTMP to form dTDP in both de novo and salvage pathways of dTTP synthesis. The polypeptide is Thymidylate kinase (Chlamydia abortus (strain DSM 27085 / S26/3) (Chlamydophila abortus)).